Here is a 144-residue protein sequence, read N- to C-terminus: Large ribosomal subunit protein uL13 (144 aa).

It belongs to the universal ribosomal protein uL13 family. In terms of assembly, part of the 50S ribosomal subunit.

This protein is one of the early assembly proteins of the 50S ribosomal subunit, although it is not seen to bind rRNA by itself. It is important during the early stages of 50S assembly. In Nitrosomonas eutropha (strain DSM 101675 / C91 / Nm57), this protein is Large ribosomal subunit protein uL13.